Reading from the N-terminus, the 427-residue chain is Glutamate-1-semialdehyde 2,1-aminomutase (427 aa).

At lysine 267 the chain carries N6-(pyridoxal phosphate)lysine.

It belongs to the class-III pyridoxal-phosphate-dependent aminotransferase family. HemL subfamily. Homodimer. It depends on pyridoxal 5'-phosphate as a cofactor.

Its subcellular location is the cytoplasm. The enzyme catalyses (S)-4-amino-5-oxopentanoate = 5-aminolevulinate. It participates in porphyrin-containing compound metabolism; protoporphyrin-IX biosynthesis; 5-aminolevulinate from L-glutamyl-tRNA(Glu): step 2/2. The chain is Glutamate-1-semialdehyde 2,1-aminomutase from Geotalea daltonii (strain DSM 22248 / JCM 15807 / FRC-32) (Geobacter daltonii).